A 379-amino-acid chain; its full sequence is UDP-N-acetylglucosamine--N-acetylmuramyl-(pentapeptide) pyrophosphoryl-undecaprenol N-acetylglucosamine transferase (379 aa).

UDP-N-acetyl-alpha-D-glucosamine contacts are provided by residues 17–19, N128, R169, S197, and Q298; that span reads TGG.

Belongs to the glycosyltransferase 28 family. MurG subfamily.

Its subcellular location is the cell inner membrane. It catalyses the reaction di-trans,octa-cis-undecaprenyl diphospho-N-acetyl-alpha-D-muramoyl-L-alanyl-D-glutamyl-meso-2,6-diaminopimeloyl-D-alanyl-D-alanine + UDP-N-acetyl-alpha-D-glucosamine = di-trans,octa-cis-undecaprenyl diphospho-[N-acetyl-alpha-D-glucosaminyl-(1-&gt;4)]-N-acetyl-alpha-D-muramoyl-L-alanyl-D-glutamyl-meso-2,6-diaminopimeloyl-D-alanyl-D-alanine + UDP + H(+). The protein operates within cell wall biogenesis; peptidoglycan biosynthesis. In terms of biological role, cell wall formation. Catalyzes the transfer of a GlcNAc subunit on undecaprenyl-pyrophosphoryl-MurNAc-pentapeptide (lipid intermediate I) to form undecaprenyl-pyrophosphoryl-MurNAc-(pentapeptide)GlcNAc (lipid intermediate II). In Brucella canis (strain ATCC 23365 / NCTC 10854 / RM-666), this protein is UDP-N-acetylglucosamine--N-acetylmuramyl-(pentapeptide) pyrophosphoryl-undecaprenol N-acetylglucosamine transferase.